We begin with the raw amino-acid sequence, 130 residues long: Small ribosomal subunit protein uS9 (130 aa).

The protein belongs to the universal ribosomal protein uS9 family.

In Haemophilus influenzae (strain 86-028NP), this protein is Small ribosomal subunit protein uS9.